Consider the following 348-residue polypeptide: Protein RecA (348 aa).

64 to 71 serves as a coordination point for ATP; the sequence is GPESSGKT. Basic and acidic residues predominate over residues 325–335; it reads YEIDGANKEPL. The interval 325–348 is disordered; the sequence is YEIDGANKEPLEETEETLSLLDDE. A compositionally biased stretch (acidic residues) spans 336-348; it reads EETEETLSLLDDE.

This sequence belongs to the RecA family.

Its subcellular location is the cytoplasm. Functionally, can catalyze the hydrolysis of ATP in the presence of single-stranded DNA, the ATP-dependent uptake of single-stranded DNA by duplex DNA, and the ATP-dependent hybridization of homologous single-stranded DNAs. It interacts with LexA causing its activation and leading to its autocatalytic cleavage. In Listeria welshimeri serovar 6b (strain ATCC 35897 / DSM 20650 / CCUG 15529 / CIP 8149 / NCTC 11857 / SLCC 5334 / V8), this protein is Protein RecA.